Reading from the N-terminus, the 419-residue chain is 20-hydroxy-prefusarin hydrolase FUS2 (419 aa).

Ser-238 is a catalytic residue.

The protein belongs to the AB hydrolase superfamily. FUS2 hydrolase family.

The protein operates within mycotoxin biosynthesis. Functionally, 20-hydroxy-prefusarin hydrolase; part of the gene cluster that mediates the biosynthesis of the mycotoxin fusarin C. Within the cluster, FUS1, FUS2, FUS8 and FUS9 are sufficient for fusarin production. The roles of the other FUS members are yet undetermined. The fusarin C synthetase FUS1 is responsible for the condensation of one acetyl-coenzyme A (CoA) unit with six malonyl-CoA units and the amide linkage of the arising heptaketide and homoserine, subsequently releasing the first intermediate, prefusarin, as an alcohol with an open ring structure. The cytochrome P450 monooxygenase FUS8 participates in multiple oxidation processes at carbon C-20 and is able to use the FUS1 product as substrate, resulting in formation of 20-hydroxy-prefusarin. This reaction seems to be essential before the 2-pyrrolidone ring closure can be catalyzed by FUS2, generating 20-hydroxy-fusarin. FUS8 is able to further oxidizes carbon C-20 after ring closure, resulting in the formation of carboxy-fusarin C. As the last step, FUS9 methylates the hydroxyl group at C-21 to generate fusarin C. Fusarin C can then rearrange to epi-fusarin C, the (z)-isomers, and fusarin A and fusarin D. The protein is 20-hydroxy-prefusarin hydrolase FUS2 of Gibberella moniliformis (strain M3125 / FGSC 7600) (Maize ear and stalk rot fungus).